A 1374-amino-acid chain; its full sequence is MMQGNTCHRMSFHPGRGCPRGRGGHGARPSAPSFRPQNLRLLHPQQPPVQYQYEPPSAPSTTFSNSPAPNFLPPRPDFVPFPPPMPPSAQGPLPPCPIRPPFPNHQMRHPFPVPPCFPPMPPPMPCPNNPPVPGAPPGQGTFPFMMPPPSMPHPPPPPVMPQQVNYQYPPGYSHHNFPPPSFNSFQNNPSSFLPSANNSSSPHFRHLPPYPLPKAPSERRSPERLKHYDDHRHRDHSHGRGERHRSLDRRERGRSPDRRRQDSRYRSDYDRGRTPSRHRSYERSRERERERHRHRDNRRSPSLERSYKKEYKRSGRSYGLSVVPEPAGCTPELPGEIIKNTDSWAPPLEIVNHRSPSREKKRARWEEEKDRWSDNQSSGKDKNYTSIKEKEPEETMPDKNEEEEEELLKPVWIRCTHSENYYSSDPMDQVGDSTVVGTSRLRDLYDKFEEELGSRQEKAKAARPPWEPPKTKLDEDLESSSESECESDEDSTCSSSSDSEVFDVIAEIKRKKAHPDRLHDELWYNDPGQMNDGPLCKCSAKARRTGIRHSIYPGEEAIKPCRPMTNNAGRLFHYRITVSPPTNFLTDRPTVIEYDDHEYIFEGFSMFAHAPLTNIPLCKVIRFNIDYTIHFIEEMMPENFCVKGLELFSLFLFRDILELYDWNLKGPLFEDSPPCCPRFHFMPRFVRFLPDGGKEVLSMHQILLYLLRCSKALVPEEEIANMLQWEELEWQKYAEECKGMIVTNPGTKPSSVRIDQLDREQFNPDVITFPIIVHFGIRPAQLSYAGDPQYQKLWKSYVKLRHLLANSPKVKQTDKQKLAQREEALQKIRQKNTMRREVTVELSSQGFWKTGIRSDVCQHAMMLPVLTHHIRYHQCLMHLDKLIGYTFQDRCLLQLAMTHPSHHLNFGMNPDHARNSLSNCGIRQPKYGDRKVHHMHMRKKGINTLINIMSRLGQDDPTPSRINHNERLEFLGDAVVEFLTSVHLYYLFPSLEEGGLATYRTAIVQNQHLAMLAKKLELDRFMLYAHGPDLCRESDLRHAMANCFEALIGAVYLEGSLEEAKQLFGRLLFNDPDLREVWLNYPLHPLQLQEPNTDRQLIETSPVLQKLTEFEEAIGVIFTHVRLLARAFTLRTVGFNHLTLGHNQRMEFLGDSIMQLVATEYLFIHFPDHHEGHLTLLRSSLVNNRTQAKVAEELGMQEYAITNDKTKRPVALRTKTLADLLESFIAALYIDKDLEYVHTFMNVCFFPRLKEFILNQDWNDPKSQLQQCCLTLRTEGKEPDIPLYKTLQTVGPSHARTYTVAVYFKGERIGCGKGPSIQQAEMGAAMDALEKYNFPQMAHQKRFIERKYRQELKEMRWEREHQEREPDETEDIKK.

Disordered stretches follow at residues 1 to 95 (MMQG…PLPP), 130 to 406 (PPVP…EEEE), and 452 to 497 (LGSR…SSSS). A compositionally biased stretch (polar residues) spans 59–68 (PSTTFSNSPA). Composition is skewed to pro residues over residues 70 to 95 (NFLP…PLPP) and 145 to 160 (MMPP…PPVM). A compositionally biased stretch (low complexity) spans 182–202 (FNSFQNNPSSFLPSANNSSSP). Composition is skewed to basic and acidic residues over residues 216-289 (PSER…ERER) and 298-313 (RRSP…EYKR). Ser355 and Ser373 each carry phosphoserine. Positions 364-399 (RWEEEKDRWSDNQSSGKDKNYTSIKEKEPEETMPDK) are enriched in basic and acidic residues. Positions 390–1365 (KEPEETMPDK…RWEREHQERE (976 aa)) are necessary for interaction with DGCR8 and pri-miRNA processing activity. Over residues 475 to 491 (EDLESSSESECESDEDS) the composition is skewed to acidic residues. Zn(2+) is bound by residues Cys536, Cys538, His549, Cys561, His609, Cys676, and His680. 2 RNase III domains span residues 876–1056 (LMHL…LEGS) and 1107–1233 (LTEF…IDKD). Glu969 contributes to the Mg(2+) binding site. His1026 contacts Zn(2+). Mg(2+)-binding residues include Asn1042, Glu1045, Glu1147, Asp1219, and Glu1222. In terms of domain architecture, DRBM spans 1260-1334 (DPKSQLQQCC…AMDALEKYNF (75 aa)).

This sequence belongs to the ribonuclease III family. In terms of assembly, component of the microprocessor complex, or pri-miRNA processing protein complex, which is composed of DROSHA and DGCR8. The microprocessor complex is a heterotrimer; each of the two DROSHA RNase III domains binds one DGCR8 (via C-terminal region). Interacts with SP1 and SNIP1. Interacts with SRRT/ARS2. Interacts with CPSF3 and ISY1; this interaction is in an RNA dependent manner. Interacts with PUS10; interaction promotes pri-miRNAs processing. It depends on Mg(2+) as a cofactor. Mn(2+) serves as cofactor. In terms of processing, degraded by autophagy in response to neuronal activity in motor neurons. Ubiquitous.

It is found in the nucleus. The protein localises to the nucleolus. Its subcellular location is the cytoplasm. It carries out the reaction Endonucleolytic cleavage to 5'-phosphomonoester.. Ribonuclease III double-stranded (ds) RNA-specific endoribonuclease that is involved in the initial step of microRNA (miRNA) biogenesis. Component of the microprocessor complex that is required to process primary miRNA transcripts (pri-miRNAs) to release precursor miRNA (pre-miRNA) in the nucleus. Within the microprocessor complex, DROSHA cleaves the 3' and 5' strands of a stem-loop in pri-miRNAs (processing center 11 bp from the dsRNA-ssRNA junction) to release hairpin-shaped pre-miRNAs that are subsequently cut by the cytoplasmic DICER to generate mature miRNAs. Involved also in pre-rRNA processing. Cleaves double-strand RNA and does not cleave single-strand RNA. Involved in the formation of GW bodies. Plays a role in growth homeostasis in response to autophagy in motor neurons. The protein is Ribonuclease 3 (DROSHA) of Homo sapiens (Human).